The primary structure comprises 1023 residues: FHIP family protein AGAP011705 (1023 aa).

Composition is skewed to polar residues over residues 1–13, 806–825, and 868–888; these read MSWL…RQSF, SMTS…SSSY, and GLNH…ASMN. Disordered regions lie at residues 1–39 and 797–927; these read MSWL…AGGG and GKLL…AETQ. Residues 889–906 show a composition bias toward low complexity; it reads VPSPVGQQQHQHQSVSSV.

The protein belongs to the FHIP family.

This is FHIP family protein AGAP011705 from Anopheles gambiae (African malaria mosquito).